Here is a 52-residue protein sequence, read N- to C-terminus: Large ribosomal subunit protein bL32c (52 aa).

The protein belongs to the bacterial ribosomal protein bL32 family.

The protein resides in the plastid. The protein localises to the chloroplast. In Nymphaea alba (White water-lily), this protein is Large ribosomal subunit protein bL32c.